A 356-amino-acid chain; its full sequence is DNA integrity scanning protein DisA (356 aa).

A DAC domain is found at 11–149 (VHTMRDTLQR…EGKSHILEEP (139 aa)). Residues G78, L96, and 109 to 113 (TRHRS) contribute to the ATP site.

The protein belongs to the DisA family. In terms of assembly, homooctamer. Requires Mg(2+) as cofactor.

The catalysed reaction is 2 ATP = 3',3'-c-di-AMP + 2 diphosphate. Participates in a DNA-damage check-point. DisA forms globular foci that rapidly scan along the chromosomes searching for lesions. In terms of biological role, also has diadenylate cyclase activity, catalyzing the condensation of 2 ATP molecules into cyclic di-AMP (c-di-AMP). c-di-AMP likely acts as a signaling molecule that may couple DNA integrity with a cellular process. This Corynebacterium efficiens (strain DSM 44549 / YS-314 / AJ 12310 / JCM 11189 / NBRC 100395) protein is DNA integrity scanning protein DisA.